We begin with the raw amino-acid sequence, 179 residues long: MKQFLDFLPLVVFFAFYKIYDIYAATAALIVATAIVLIYSWVRFRKVEKMALITFVLVVVFGGLTLFFHNDEFIKWKVTVIYALFAGALLVSQWVMKKPLIQRMLSKELTLPQPVWSKLNLAWAVFFILCGLANIYIAFWLPQNIWVNFKVFGLTALTLIFTLLSGIYIYRHMPQEDKS.

Helical transmembrane passes span Ile-22–Val-42, Met-50–Asn-70, Trp-76–Met-96, Leu-121–Leu-141, and Phe-149–Ile-169.

It belongs to the YciB family.

It is found in the cell inner membrane. Plays a role in cell envelope biogenesis, maintenance of cell envelope integrity and membrane homeostasis. The sequence is that of Inner membrane-spanning protein YciB from Shigella boydii serotype 4 (strain Sb227).